A 262-amino-acid polypeptide reads, in one-letter code: Adenosylcobinamide-GDP ribazoletransferase (262 aa).

Helical transmembrane passes span 43-63, 66-86, 120-140, 146-166, 191-211, and 242-262; these read YFGLVGLLVGLLSAIIFWLTQ, LPAGVSVLLSMLTGILLTGGF, GALALIMVLLLKWQLLVELAL, AGSAMIVAHTVSRVVAASLIF, LFILIASGVLVLLVLKGIAAL, and AAQQICEIVCYFVLLVVGGIL.

The protein belongs to the CobS family. It depends on Mg(2+) as a cofactor.

The protein localises to the cell inner membrane. The enzyme catalyses alpha-ribazole + adenosylcob(III)inamide-GDP = adenosylcob(III)alamin + GMP + H(+). It catalyses the reaction alpha-ribazole 5'-phosphate + adenosylcob(III)inamide-GDP = adenosylcob(III)alamin 5'-phosphate + GMP + H(+). Its pathway is cofactor biosynthesis; adenosylcobalamin biosynthesis; adenosylcobalamin from cob(II)yrinate a,c-diamide: step 7/7. Functionally, joins adenosylcobinamide-GDP and alpha-ribazole to generate adenosylcobalamin (Ado-cobalamin). Also synthesizes adenosylcobalamin 5'-phosphate from adenosylcobinamide-GDP and alpha-ribazole 5'-phosphate. This Shewanella oneidensis (strain ATCC 700550 / JCM 31522 / CIP 106686 / LMG 19005 / NCIMB 14063 / MR-1) protein is Adenosylcobinamide-GDP ribazoletransferase.